The following is a 639-amino-acid chain: Protein zwilch homolog (639 aa).

Over residues 76–95 (QKTSSLLNRRENKKTIKSEK) the composition is skewed to basic and acidic residues. Positions 76 to 116 (QKTSSLLNRRENKKTIKSEKEDESMDMETAEGDKENTVSET) are disordered. Positions 96-105 (EDESMDMETA) are enriched in acidic residues.

It belongs to the ZWILCH family. In terms of assembly, component of the RZZ complex composed of rod-1, czw-1 and zwl-1. Interacts with the spindly-like protein spdl-1. Interacts with NDC80 complex component ndc-80.

Its subcellular location is the cytoplasm. It is found in the cell cortex. The protein localises to the chromosome. It localises to the centromere. The protein resides in the kinetochore. Its subcellular location is the cytoskeleton. It is found in the spindle. Functionally, essential component of the mitotic checkpoint, which prevents cells from prematurely exiting mitosis. Required for chromosome segregation, the assembly of the dynein-dynactin and mdf-1-mdf-2 complexes onto kinetochores and spindle pole separation. Its function related to the spindle assembly machinery and kinetochore-microtubule attachments likely depends on its association in the mitotic RZZ complex. The RZZ complex recruits the spindly-like protein spdl-1 to kinetochores. To prevent irregular chromosome segregation, the complex also inhibits the attachment of the kinetochore-associated NDC80 complex to microtubules. The recruitment of spdl-1 to kinetochores relieves this inhibition. Required for embryonic development. The polypeptide is Protein zwilch homolog (zwl-1) (Caenorhabditis briggsae).